Reading from the N-terminus, the 232-residue chain is Ion-translocating oxidoreductase complex subunit E (232 aa).

The next 6 helical transmembrane spans lie at 18 to 38 (GLVQ…LTNA), 39 to 59 (LGLG…VSLV), 69 to 89 (IPVF…LINA), 93 to 113 (GLYL…IIIG), 127 to 147 (AAFD…VLGA), and 182 to 202 (PFLL…LIAL).

The protein belongs to the NqrDE/RnfAE family. As to quaternary structure, the complex is composed of six subunits: RnfA, RnfB, RnfC, RnfD, RnfE and RnfG.

The protein localises to the cell inner membrane. Its function is as follows. Part of a membrane-bound complex that couples electron transfer with translocation of ions across the membrane. The sequence is that of Ion-translocating oxidoreductase complex subunit E from Shewanella sp. (strain ANA-3).